The following is a 294-amino-acid chain: 4-diphosphocytidyl-2-C-methyl-D-erythritol kinase (294 aa).

The active site involves K11. P96 to A106 is a binding site for ATP. D138 is an active-site residue.

It belongs to the GHMP kinase family. IspE subfamily.

It catalyses the reaction 4-CDP-2-C-methyl-D-erythritol + ATP = 4-CDP-2-C-methyl-D-erythritol 2-phosphate + ADP + H(+). It functions in the pathway isoprenoid biosynthesis; isopentenyl diphosphate biosynthesis via DXP pathway; isopentenyl diphosphate from 1-deoxy-D-xylulose 5-phosphate: step 3/6. Catalyzes the phosphorylation of the position 2 hydroxy group of 4-diphosphocytidyl-2C-methyl-D-erythritol. The polypeptide is 4-diphosphocytidyl-2-C-methyl-D-erythritol kinase (Rhodopseudomonas palustris (strain BisB5)).